The sequence spans 766 residues: Discoidin domain-containing receptor A (766 aa).

The N-terminal stretch at 1–18 (MQIALVLLAIYGTTTTNT) is a signal peptide. Residues 19-372 (LRIDQCGENA…PPSSAATQQL (354 aa)) lie on the Extracellular side of the membrane. F5/8 type C domains lie at 24 to 180 (CGEN…IHGC) and 195 to 351 (SRLD…FTSA). Cys-24 and Cys-180 are disulfide-bonded. N-linked (GlcNAc...) asparagine glycans are attached at residues Asn-87, Asn-103, Asn-129, Asn-242, Asn-268, Asn-311, and Asn-353. The chain crosses the membrane as a helical span at residues 373–393 (LVVCGIIFLTIFACVAYCVSV). The Cytoplasmic segment spans residues 394–766 (CLKRRQKNKS…FERLVKPFQD (373 aa)). Residues 475–501 (NFPPPPEGREEHTYSQPVSPENSSNGS) form a disordered region. Polar residues predominate over residues 488–501 (YSQPVSPENSSNGS). The 248-residue stretch at 519–766 (LLIGKAIGEG…FERLVKPFQD (248 aa)) folds into the Protein kinase domain. Residues 525 to 533 (IGEGKFTMI) and Lys-547 contribute to the ATP site.

This sequence belongs to the protein kinase superfamily. Tyr protein kinase family. Insulin receptor subfamily. Expressed in neurons in head and tail, some motoneurons in ventral nerve cord, in PVP interneurons, pharynx and stomato-intestinal muscle.

It localises to the cell membrane. Its subcellular location is the cell projection. It is found in the axon. The protein resides in the perikaryon. Its function is as follows. Receptor which, together with svh-4, is involved in axon guidance to establish the tracts for the ventral and dorsal nerve cords during nervous system development. May play a role in axon regeneration following injury in D-type motor neurons. In Caenorhabditis elegans, this protein is Discoidin domain-containing receptor A.